Reading from the N-terminus, the 424-residue chain is Probable threonylcarbamoyladenosine tRNA methylthiotransferase (424 aa).

Residues 1–106 (MRVAIETYGC…VVDAVYSALN (106 aa)) form the MTTase N-terminal domain. [4Fe-4S] cluster-binding residues include Cys10, Cys44, Cys73, Cys143, Cys147, and Cys150. A Radical SAM core domain is found at 129 to 359 (LRENAIAIVS…TDLMRKIGLE (231 aa)). One can recognise a TRAM domain in the interval 362-420 (KRFVGKKLRVLVTKEGKNGRNLARMNSYRAVVTEGAVGEFVEVKIKDCRFNYLIGQLAA).

The protein belongs to the methylthiotransferase family. CDKAL1 subfamily. The cofactor is [4Fe-4S] cluster.

It catalyses the reaction N(6)-L-threonylcarbamoyladenosine(37) in tRNA + (sulfur carrier)-SH + AH2 + 2 S-adenosyl-L-methionine = 2-methylsulfanyl-N(6)-L-threonylcarbamoyladenosine(37) in tRNA + (sulfur carrier)-H + 5'-deoxyadenosine + L-methionine + A + S-adenosyl-L-homocysteine + 2 H(+). Functionally, catalyzes the methylthiolation of N6-threonylcarbamoyladenosine (t(6)A), leading to the formation of 2-methylthio-N6-threonylcarbamoyladenosine (ms(2)t(6)A) at position 37 in tRNAs that read codons beginning with adenine. The polypeptide is Probable threonylcarbamoyladenosine tRNA methylthiotransferase (Archaeoglobus fulgidus (strain ATCC 49558 / DSM 4304 / JCM 9628 / NBRC 100126 / VC-16)).